Reading from the N-terminus, the 394-residue chain is Ceramide synthase 4 (394 aa).

Over 1–31 (MLSSFNEWFWQDRFWLPPNVTWTELEDRDGR) the chain is Lumenal. N19 carries an N-linked (GlcNAc...) asparagine glycan. The helical transmembrane segment at 32-52 (VYPHPQDLLAALPLALVLLAM) threads the bilayer. Residues 67-128 (WLGVRDQTRR…RRRRNQDRPQ (62 aa)) are homeobox-like. Positions 131–332 (KKFCEASWRF…ILRMLYSFMK (202 aa)) constitute a TLC domain. 4 helical membrane passes run 140–160 (FLFYLSSFVGGLSVLYHESWL), 179–199 (LYWWYLLELGFYLSLLIRLPF), 209–229 (QVIHHFVAVILMTFSYSANLL), and 260–280 (VCDALFLIFSFVFFYTRLVLF). The short motif at 291–301 (ESISNRGPFFG) is the Last loop motif element. Residues 304–324 (FFNGLLMLLQLLHVFWSCLIL) form a helical membrane-spanning segment. Topologically, residues 325-394 (RMLYSFMKKG…RLTNRHTTAT (70 aa)) are cytoplasmic. A disordered region spans residues 341–394 (RSDVEESDSSEEAAAAQEPLQLKNGAAGGPRPAPTDGPRSRVAGRLTNRHTTAT). A phosphoserine mark is found at S342, S349, and S350.

Phosphorylated at the C-terminus by CK2. In terms of processing, N-glycosylated.

It is found in the endoplasmic reticulum membrane. It catalyses the reaction sphinganine + octadecanoyl-CoA = N-(octadecanoyl)-sphinganine + CoA + H(+). The enzyme catalyses eicosanoyl-CoA + sphinganine = N-eicosanoylsphinganine + CoA + H(+). It carries out the reaction docosanoyl-CoA + sphinganine = N-docosanoylsphinganine + CoA + H(+). The catalysed reaction is tetracosanoyl-CoA + sphinganine = N-tetracosanoylsphinganine + CoA + H(+). It catalyses the reaction hexacosanoyl-CoA + sphinganine = N-hexacosanoylsphinganine + CoA + H(+). The enzyme catalyses a fatty acyl-CoA + sphing-4-enine = an N-acylsphing-4-enine + CoA + H(+). It carries out the reaction sphing-4-enine + octadecanoyl-CoA = N-octadecanoylsphing-4-enine + CoA + H(+). The catalysed reaction is hexadecasphinganine + octadecanoyl-CoA = N-octadecanoylhexadecasphinganine + CoA + H(+). It participates in lipid metabolism; sphingolipid metabolism. In terms of biological role, ceramide synthase that catalyzes formation of ceramide from sphinganine and acyl-CoA substrates, with high selectivity toward long and very-long chains (C18:0-C22:0) as acyl donor. This Homo sapiens (Human) protein is Ceramide synthase 4.